Here is a 234-residue protein sequence, read N- to C-terminus: Biosynthetic peptidoglycan transglycosylase (234 aa).

The chain crosses the membrane as a helical span at residues Arg-11–Phe-31.

Belongs to the glycosyltransferase 51 family.

The protein localises to the cell inner membrane. The enzyme catalyses [GlcNAc-(1-&gt;4)-Mur2Ac(oyl-L-Ala-gamma-D-Glu-L-Lys-D-Ala-D-Ala)](n)-di-trans,octa-cis-undecaprenyl diphosphate + beta-D-GlcNAc-(1-&gt;4)-Mur2Ac(oyl-L-Ala-gamma-D-Glu-L-Lys-D-Ala-D-Ala)-di-trans,octa-cis-undecaprenyl diphosphate = [GlcNAc-(1-&gt;4)-Mur2Ac(oyl-L-Ala-gamma-D-Glu-L-Lys-D-Ala-D-Ala)](n+1)-di-trans,octa-cis-undecaprenyl diphosphate + di-trans,octa-cis-undecaprenyl diphosphate + H(+). The protein operates within cell wall biogenesis; peptidoglycan biosynthesis. Functionally, peptidoglycan polymerase that catalyzes glycan chain elongation from lipid-linked precursors. This chain is Biosynthetic peptidoglycan transglycosylase, found in Chromohalobacter salexigens (strain ATCC BAA-138 / DSM 3043 / CIP 106854 / NCIMB 13768 / 1H11).